The chain runs to 325 residues: MSDMASWQPSAPVANLLKRASILSTIRRFFSDRGVLEVDTPSMSQATVTDVHLVPFQTHFVGPGVAQGMMLYLMTSPEYHMKRLLAAGSGPIYQLCRSFRNEESGRYHNPEFTMLEWYRPHYDMYRLMNEVDDLLQQVLECESAETLSYQQAFIRHLDVDPLSADKTQLREVAAKLDLSNVADNEEDRDTLLQLLFAFGVEPHIGKERPVFVYHFPASQASLAQISTEDHRVAERFEVYYRGVELANGFHELTDAAEQRQRFEQDNRKRAAAGLPQQPIDEHLLAALEHGMPDSSGVALGVDRLIMLALSAERLSEVIAFSVDRA.

Residue 76 to 78 (SPE) coordinates substrate. ATP contacts are provided by residues 100–102 (RNE) and Asn109. Residue Tyr118 coordinates substrate. 244 to 245 (EL) contacts ATP. Glu251 is a substrate binding site. Gly300 contributes to the ATP binding site.

This sequence belongs to the class-II aminoacyl-tRNA synthetase family. EpmA subfamily. As to quaternary structure, homodimer.

The catalysed reaction is D-beta-lysine + L-lysyl-[protein] + ATP = N(6)-((3R)-3,6-diaminohexanoyl)-L-lysyl-[protein] + AMP + diphosphate + H(+). Functionally, with EpmB is involved in the beta-lysylation step of the post-translational modification of translation elongation factor P (EF-P). Catalyzes the ATP-dependent activation of (R)-beta-lysine produced by EpmB, forming a lysyl-adenylate, from which the beta-lysyl moiety is then transferred to the epsilon-amino group of a conserved specific lysine residue in EF-P. The polypeptide is Elongation factor P--(R)-beta-lysine ligase (Edwardsiella ictaluri (strain 93-146)).